Consider the following 1271-residue polypeptide: Diacylglycerol kinase kappa (1271 aa).

Over residues 1-15 (MDRGAAAAQGTAPPQ) the composition is skewed to low complexity. Residues 1–160 (MDRGAAAAQG…PEPTPEPVTE (160 aa)) are disordered. Pro residues predominate over residues 23-44 (SPEPPPPWPPPPPPPAPPPAPP). 33 repeat units span residues 48-51 (EASP), 52-55 (EPIP), 56-59 (EPCP), 60-63 (ELAP), 64-67 (GPCP), 68-71 (EATS), 72-75 (ESAT), 76-79 (ELYT), 80-83 (EPTP), 84-87 (EPAT), 88-91 (EPAS), 92-95 (EPAP), 96-99 (EPAT), 100-103 (EPAP), 104-107 (EPAT), 108-111 (EPAP), 112-115 (EPAP), 116-119 (EPAT), 120-123 (ESAP), 124-127 (EPTP), 128-131 (EPAL), 132-135 (ESVP), 136-139 (EPAP), 140-143 (ELTP), 144-147 (EVAP), 148-151 (ELAP), 152-155 (EPTP), 156-159 (EPVT), 160-163 (ELAP), 164-167 (EFCP), 168-171 (EAAP), 172-175 (EFRP), and 176-179 (SPAP). The tract at residues 48–179 (EASPEPIPEP…APEFRPSPAP (132 aa)) is 33 X 4 AA approximate tandem repeats of E-P-A-P. A compositionally biased stretch (pro residues) spans 52–66 (EPIPEPCPELAPGPC). Tyr78 bears the Phosphotyrosine mark. Residues 82–116 (TPEPATEPASEPAPEPATEPAPEPATEPAPEPAPE) show a composition bias toward pro residues. Residues 139-149 (PELTPEVAPEL) are compositionally biased toward low complexity. A disordered region spans residues 190-209 (ERGLKTSPSPSPSPSPRTPM). Positions 216-309 (KILKEGPMLK…WINIIKTIQQ (94 aa)) constitute a PH domain. Phorbol-ester/DAG-type zinc fingers lie at residues 327–377 (MHCW…SKDC) and 398–449 (PHQW…SKEC). The DAGKc domain maps to 487-622 (ACSCPLLIFI…LDRWSVMIRE (136 aa)). 2 disordered regions span residues 805 to 825 (DDPE…GTLS) and 1252 to 1271 (RHRE…RSQL). Residues 1199 to 1268 (PIFVPEEKSS…EGDDPLTPSR (70 aa)) form a required for localization to the plasma membrane region.

The protein belongs to the eukaryotic diacylglycerol kinase family. In terms of assembly, does not form homooligomers. In terms of processing, phosphorylated at Tyr-78 by some member of the SRC family in response to H(2)O(2). As to expression, expressed in testis, and to a lesser extent in placenta.

The protein resides in the cell membrane. It catalyses the reaction a 1,2-diacyl-sn-glycerol + ATP = a 1,2-diacyl-sn-glycero-3-phosphate + ADP + H(+). It carries out the reaction 1,2-di-(9Z-octadecenoyl)-sn-glycerol + ATP = 1,2-di-(9Z-octadecenoyl)-sn-glycero-3-phosphate + ADP + H(+). Its pathway is lipid metabolism; glycerolipid metabolism. With respect to regulation, inhibited in response to H(2)O(2). Functionally, diacylglycerol kinase that converts diacylglycerol/DAG into phosphatidic acid/phosphatidate/PA and regulates the respective levels of these two bioactive lipids. Thereby, acts as a central switch between the signaling pathways activated by these second messengers with different cellular targets and opposite effects in numerous biological processes. In Homo sapiens (Human), this protein is Diacylglycerol kinase kappa.